The chain runs to 165 residues: Glutamyl-tRNA(Gln) amidotransferase subunit F, mitochondrial (165 aa).

Over residues valine 137–threonine 153 the composition is skewed to basic and acidic residues. A disordered region spans residues valine 137–glutamate 165.

This sequence belongs to the GatF family. Subunit of the heterotrimeric GatFAB amidotransferase (AdT) complex, composed of A, B and F subunits.

Its subcellular location is the mitochondrion inner membrane. The enzyme catalyses L-glutamyl-tRNA(Gln) + L-glutamine + ATP + H2O = L-glutaminyl-tRNA(Gln) + L-glutamate + ADP + phosphate + H(+). Its function is as follows. Allows the formation of correctly charged Gln-tRNA(Gln) through the transamidation of misacylated Glu-tRNA(Gln) in the mitochondria. The reaction takes place in the presence of glutamine and ATP through an activated gamma-phospho-Glu-tRNA(Gln). Required for proper protein synthesis within the mitochondrion. The polypeptide is Glutamyl-tRNA(Gln) amidotransferase subunit F, mitochondrial (Clavispora lusitaniae (strain ATCC 42720) (Yeast)).